The primary structure comprises 783 residues: Polyribonucleotide nucleotidyltransferase 1, mitochondrial (783 aa).

The transit peptide at 1–45 (MAACRLCCLCPCLRPLGCGPLGRPGRNRALSYLQMRALWSSTGSR) directs the protein to the mitochondrion. 3 positions are modified to N6-acetyllysine: K250, K264, and K285. K552 is subject to N6-succinyllysine. The region spanning 605–664 (PVVETVKVPLSKRAKFVGPGGYHLKKLQAETGVTISQVDEETFSIFAPTPTAMHEARDFI) is the KH domain. The S1 motif domain maps to 679–750 (GAVYTATITE…ADGRMRLSRK (72 aa)). S754 carries the post-translational modification Phosphoserine.

Belongs to the polyribonucleotide nucleotidyltransferase family. In terms of assembly, homotrimer; in free form. Homooligomer. Component of the mitochondrial degradosome (mtEXO) complex which is a heteropentamer containing 2 copies of SUPV3L1 and 3 copies of PNPT1. As part of the mitochondrial degradosome complex, interacts with GRSF1 in an RNA-dependent manner; the interaction enhances the activity of the complex. Interacts with TCL1A; the interaction has no effect on PNPT1 exonuclease activity.

It is found in the cytoplasm. The protein resides in the mitochondrion matrix. It localises to the mitochondrion intermembrane space. It catalyses the reaction RNA(n+1) + phosphate = RNA(n) + a ribonucleoside 5'-diphosphate. In terms of biological role, RNA-binding protein implicated in numerous RNA metabolic processes. Catalyzes the phosphorolysis of single-stranded polyribonucleotides processively in the 3'-to-5' direction. Mitochondrial intermembrane factor with RNA-processing exoribonulease activity. Component of the mitochondrial degradosome (mtEXO) complex, that degrades 3' overhang double-stranded RNA with a 3'-to-5' directionality in an ATP-dependent manner. Involved in the degradation of non-coding mitochondrial transcripts (MT-ncRNA) and tRNA-like molecules. Required for correct processing and polyadenylation of mitochondrial mRNAs. Plays a role as a cytoplasmic RNA import factor that mediates the translocation of small RNA components, like the 5S RNA, the RNA subunit of ribonuclease P and the mitochondrial RNA-processing (MRP) RNA, into the mitochondrial matrix. Plays a role in mitochondrial morphogenesis and respiration; regulates the expression of the electron transport chain (ETC) components at the mRNA and protein levels. In the cytoplasm, shows a 3'-to-5' exoribonuclease mediating mRNA degradation activity; degrades c-myc mRNA upon treatment with IFNB1/IFN-beta, resulting in a growth arrest in melanoma cells. Regulates the stability of specific mature miRNAs in melanoma cells; specifically and selectively degrades miR-221, preferentially. Also plays a role in RNA cell surveillance by cleaning up oxidized RNAs. Binds to the RNA subunit of ribonuclease P, MRP RNA and miR-221 microRNA. This chain is Polyribonucleotide nucleotidyltransferase 1, mitochondrial (Pnpt1), found in Mus musculus (Mouse).